A 192-amino-acid polypeptide reads, in one-letter code: Putative manganese efflux pump MntP (192 aa).

6 helical membrane-spanning segments follow: residues 2 to 22 (IAII…AFAV), 41 to 61 (SALW…YAAS), 62 to 82 (AFSA…LAFI), 109 to 129 (MLPL…SLAF), 136 to 156 (FAIL…LYIG), and 172 to 192 (GVVL…VIAF).

Belongs to the MntP (TC 9.B.29) family.

Its subcellular location is the cell membrane. Functionally, probably functions as a manganese efflux pump. The polypeptide is Putative manganese efflux pump MntP (Bifidobacterium longum subsp. infantis (strain ATCC 15697 / DSM 20088 / JCM 1222 / NCTC 11817 / S12)).